We begin with the raw amino-acid sequence, 151 residues long: Ribosome maturation factor RimP (151 aa).

Belongs to the RimP family.

The protein localises to the cytoplasm. In terms of biological role, required for maturation of 30S ribosomal subunits. The chain is Ribosome maturation factor RimP from Vibrio parahaemolyticus serotype O3:K6 (strain RIMD 2210633).